Reading from the N-terminus, the 513-residue chain is Nitrogenase molybdenum-iron protein beta chain (513 aa).

[8Fe-7S] cluster-binding residues include Cys-70, Cys-95, and Cys-153.

Belongs to the NifD/NifK/NifE/NifN family. In terms of assembly, tetramer of two alpha and two beta chains. Forms complex with the iron protein (nitrogenase component 2). The cofactor is [8Fe-7S] cluster.

The catalysed reaction is N2 + 8 reduced [2Fe-2S]-[ferredoxin] + 16 ATP + 16 H2O = H2 + 8 oxidized [2Fe-2S]-[ferredoxin] + 2 NH4(+) + 16 ADP + 16 phosphate + 6 H(+). In terms of biological role, this molybdenum-iron protein is part of the nitrogenase complex that catalyzes the key enzymatic reactions in nitrogen fixation. The chain is Nitrogenase molybdenum-iron protein beta chain (nifK1) from Sinorhizobium fredii (strain NBRC 101917 / NGR234).